Consider the following 632-residue polypeptide: Golgin subfamily A member 8N (632 aa).

The disordered stretch occupies residues 1 to 76 (MAEETQHNKL…TSSATLKDLE (76 aa)). Positions 38–50 (TNGSIPETATSGG) are enriched in polar residues. 2 coiled-coil regions span residues 85-150 (VLDS…TDLY) and 209-421 (ELEQ…SLMA). Disordered stretches follow at residues 423-445 (PGEG…PMPS), 505-524 (DAAL…DEGE), and 552-573 (NSAD…ADKH). Over residues 508–520 (LGGGHHQAGAQGG) the composition is skewed to gly residues.

This sequence belongs to the GOLGA8 family.

The sequence is that of Golgin subfamily A member 8N from Homo sapiens (Human).